The following is a 54-amino-acid chain: Preprotein translocase subunit SecG (54 aa).

The Cytoplasmic portion of the chain corresponds to 1-31 (MSSGQNSGGLMSSAGLVRYFDAEDRNSIRID). Residues 32–53 (PKTIVAFGVLFGVGVLVLNALA) traverse the membrane as a helical segment. Ile54 is a topological domain (extracellular).

This sequence belongs to the SEC61-beta family. In terms of assembly, component of the protein translocase complex. Heterotrimer consisting of alpha (SecY), beta (SecG) and gamma (SecE) subunits. Can form oligomers of the heterotrimer.

The protein resides in the cell membrane. In terms of biological role, involved in protein export. The function of the beta subunit is unknown, but it may be involved in stabilization of the trimeric complex. The sequence is that of Preprotein translocase subunit SecG from Haloquadratum walsbyi (strain DSM 16790 / HBSQ001).